The primary structure comprises 597 residues: Protein IQ-DOMAIN 29 (597 aa).

The tract at residues 1–31 (MGKTPSPGKWIKSLLGKKSSKSSLEKGGEKL) is disordered. 3 IQ domains span residues 106-134 (LEEA…GITR), 135-153 (VQAV…ATYS), and 157-183 (GIVK…QKTN). A calmodulin-binding region spans residues 159–173 (VKVQALVRGKKARSS). Positions 264 to 271 (KKRSFQAV) match the Nuclear localization signal 1 motif. 2 disordered regions span residues 268-379 (FQAV…KKEI) and 407-597 (LIPV…EWKR). A compositionally biased stretch (low complexity) spans 289–300 (STTANSSTSRST). Basic and acidic residues predominate over residues 319 to 329 (ELSKIENDKSK). The short motif at 356-363 (HKKASLSN) is the Nuclear localization signal 2 element. A compositionally biased stretch (basic and acidic residues) spans 414-463 (KESDLDKDEKSLVLDKPEQDELRTAERDDKAEEELKTAERDDSAEEKIQE). The segment covering 467–480 (QISSENGNVASENT) has biased composition (polar residues). Over residues 481-500 (KPSDRRASLPAKIENHHQDD) the composition is skewed to basic and acidic residues. Residues 572–584 (GSMNSDRSFSSSK) show a composition bias toward polar residues. The span at 585–597 (DIGDKSTKAEWKR) shows a compositional bias: basic and acidic residues.

Belongs to the IQD family. In terms of assembly, binds to multiple calmodulin (CaM) in the presence of Ca(2+) and CaM-like proteins.

The protein resides in the nucleus. It localises to the nucleus envelope. The protein localises to the cytoplasm. It is found in the cytoskeleton. Its subcellular location is the cell membrane. Its function is as follows. May be involved in cooperative interactions with calmodulins or calmodulin-like proteins. Recruits calmodulin proteins to microtubules, thus being a potential scaffold in cellular signaling and trafficking. May associate with nucleic acids and regulate gene expression at the transcriptional or post-transcriptional level. The protein is Protein IQ-DOMAIN 29 of Arabidopsis thaliana (Mouse-ear cress).